We begin with the raw amino-acid sequence, 369 residues long: Maltose/maltodextrin import ATP-binding protein MalK (369 aa).

The region spanning 4–234 (VTLSSVYKAF…PANRFVAGFI (231 aa)) is the ABC transporter domain. 36–43 (GPSGCGKS) serves as a coordination point for ATP.

This sequence belongs to the ABC transporter superfamily. Maltooligosaccharide importer (TC 3.A.1.1.1) family. As to quaternary structure, the complex is composed of two ATP-binding proteins (MalK), two transmembrane proteins (MalG and MalK) and a solute-binding protein (MalE).

The protein localises to the cell inner membrane. The catalysed reaction is D-maltose(out) + ATP + H2O = D-maltose(in) + ADP + phosphate + H(+). Functionally, part of the ABC transporter complex MalEFGK involved in maltose/maltodextrin import. Responsible for energy coupling to the transport system. The sequence is that of Maltose/maltodextrin import ATP-binding protein MalK from Yersinia pestis bv. Antiqua (strain Antiqua).